The chain runs to 318 residues: Pyrimidine-specific ribonucleoside hydrolase RihA (318 aa).

His-240 is an active-site residue.

The protein belongs to the IUNH family. RihA subfamily.

In terms of biological role, hydrolyzes cytidine or uridine to ribose and cytosine or uracil, respectively. The polypeptide is Pyrimidine-specific ribonucleoside hydrolase RihA (Shewanella baltica (strain OS155 / ATCC BAA-1091)).